The following is a 345-amino-acid chain: MNPIINLILLSSMIAGTILTMSSHHWVSAWLGLELNTLAIIPIISKTHHPRATEASTKYFLIQAASSALFLLSGITNAYSHGTWDMAHLTNTPSKIMLSVALATKLGLAPIHFWLPEVLQGTPMITALIITTWQKIAPMALLITTWNLIPPTITLIMGLLSTIIGGLGGLNQTQLRKMMAYSSIAHLGWMITITTITPSLALFNLTLYILLTTSTMLIMHLTLSKTLQNTMLIYSYSPTTASLFLLSLLSLGGLPPLSGFSPKWLILQELTTHHLTPLALLMAITALLSLMFYLRTSYISTMTIPPSTTPLKNTWRLKSNSNTSLLSSLILLSLFLLPITPLMIQ.

Transmembrane regions (helical) follow at residues 1–21, 25–45, 59–79, 96–116, 123–143, 148–168, 191–211, 240–260, 274–294, and 324–344; these read MNPI…ILTM, HWVS…PIIS, YFLI…TNAY, IMLS…FWLP, PMIT…ALLI, LIPP…GGLG, ITIT…YILL, TASL…LSGF, HLTP…MFYL, and SLLS…PLMI.

Belongs to the complex I subunit 2 family.

It localises to the mitochondrion inner membrane. The catalysed reaction is a ubiquinone + NADH + 5 H(+)(in) = a ubiquinol + NAD(+) + 4 H(+)(out). In terms of biological role, core subunit of the mitochondrial membrane respiratory chain NADH dehydrogenase (Complex I) that is believed to belong to the minimal assembly required for catalysis. Complex I functions in the transfer of electrons from NADH to the respiratory chain. The immediate electron acceptor for the enzyme is believed to be ubiquinone. The sequence is that of NADH-ubiquinone oxidoreductase chain 2 (MT-ND2) from Varanus timorensis (Timor monitor).